The chain runs to 472 residues: Succinate-semialdehyde dehydrogenase [NADP(+)] (472 aa).

NADP(+)-binding positions include 134-135 (WN), 158-161 (KHAS), and 210-211 (GS). Glu232 (proton acceptor) is an active-site residue. Leu233 is a binding site for NADP(+). Cys266 acts as the Nucleophile in catalysis. Residue Glu363 participates in NADP(+) binding.

The protein belongs to the aldehyde dehydrogenase family.

The catalysed reaction is succinate semialdehyde + NADP(+) + H2O = succinate + NADPH + 2 H(+). Catalyzes the NADP(+)-dependent oxidation of succinate semialdehyde to succinate. It is believed to be the main source of succinate semialdehyde dehydrogenase activity in Mycobacterium. The polypeptide is Succinate-semialdehyde dehydrogenase [NADP(+)] (gabD1) (Mycolicibacterium paratuberculosis (strain ATCC BAA-968 / K-10) (Mycobacterium paratuberculosis)).